Consider the following 171-residue polypeptide: 3-hydroxydecanoyl-[acyl-carrier-protein] dehydratase (171 aa).

Residue histidine 71 is part of the active site.

The protein belongs to the thioester dehydratase family. FabA subfamily. In terms of assembly, homodimer.

The protein localises to the cytoplasm. The catalysed reaction is a (3R)-hydroxyacyl-[ACP] = a (2E)-enoyl-[ACP] + H2O. It carries out the reaction (3R)-hydroxydecanoyl-[ACP] = (2E)-decenoyl-[ACP] + H2O. It catalyses the reaction (2E)-decenoyl-[ACP] = (3Z)-decenoyl-[ACP]. It functions in the pathway lipid metabolism; fatty acid biosynthesis. Functionally, necessary for the introduction of cis unsaturation into fatty acids. Catalyzes the dehydration of (3R)-3-hydroxydecanoyl-ACP to E-(2)-decenoyl-ACP and then its isomerization to Z-(3)-decenoyl-ACP. Can catalyze the dehydratase reaction for beta-hydroxyacyl-ACPs with saturated chain lengths up to 16:0, being most active on intermediate chain length. This chain is 3-hydroxydecanoyl-[acyl-carrier-protein] dehydratase, found in Agrobacterium fabrum (strain C58 / ATCC 33970) (Agrobacterium tumefaciens (strain C58)).